A 306-amino-acid polypeptide reads, in one-letter code: Pantothenate kinase (306 aa).

90-97 (GSVAVGKS) contributes to the ATP binding site.

The protein belongs to the prokaryotic pantothenate kinase family.

It is found in the cytoplasm. It catalyses the reaction (R)-pantothenate + ATP = (R)-4'-phosphopantothenate + ADP + H(+). It participates in cofactor biosynthesis; coenzyme A biosynthesis; CoA from (R)-pantothenate: step 1/5. The sequence is that of Pantothenate kinase (coaA) from Listeria innocua serovar 6a (strain ATCC BAA-680 / CLIP 11262).